We begin with the raw amino-acid sequence, 148 residues long: Large ribosomal subunit protein bL9 (148 aa).

This sequence belongs to the bacterial ribosomal protein bL9 family.

Binds to the 23S rRNA. The chain is Large ribosomal subunit protein bL9 from Finegoldia magna (strain ATCC 29328 / DSM 20472 / WAL 2508) (Peptostreptococcus magnus).